A 1270-amino-acid polypeptide reads, in one-letter code: DNA-directed RNA polymerase subunit beta (1270 aa).

The protein belongs to the RNA polymerase beta chain family. As to quaternary structure, the RNAP catalytic core consists of 2 alpha, 1 beta, 1 beta' and 1 omega subunit. When a sigma factor is associated with the core the holoenzyme is formed, which can initiate transcription.

The catalysed reaction is RNA(n) + a ribonucleoside 5'-triphosphate = RNA(n+1) + diphosphate. Functionally, DNA-dependent RNA polymerase catalyzes the transcription of DNA into RNA using the four ribonucleoside triphosphates as substrates. This chain is DNA-directed RNA polymerase subunit beta, found in Porphyromonas cangingivalis.